Consider the following 690-residue polypeptide: Elongation factor G (690 aa).

Residues 8-283 (EDYRNFGIMA…AVVDFLPSPL (276 aa)) form the tr-type G domain. GTP is bound by residues 17-24 (AHIDAGKT), 81-85 (DTPGH), and 135-138 (NKMD).

The protein belongs to the TRAFAC class translation factor GTPase superfamily. Classic translation factor GTPase family. EF-G/EF-2 subfamily.

It is found in the cytoplasm. Its function is as follows. Catalyzes the GTP-dependent ribosomal translocation step during translation elongation. During this step, the ribosome changes from the pre-translocational (PRE) to the post-translocational (POST) state as the newly formed A-site-bound peptidyl-tRNA and P-site-bound deacylated tRNA move to the P and E sites, respectively. Catalyzes the coordinated movement of the two tRNA molecules, the mRNA and conformational changes in the ribosome. The sequence is that of Elongation factor G from Nitrobacter hamburgensis (strain DSM 10229 / NCIMB 13809 / X14).